We begin with the raw amino-acid sequence, 58 residues long: T-cell receptor gamma alternate reading frame protein (58 aa).

In terms of tissue distribution, detected at low levels in the ductal cells of the salivary gland but not in the acinar cells (at protein level). Expressed in endometrium (at protein level). Expressed in epithelial cells within the acinar ducts of the prostate.

The polypeptide is T-cell receptor gamma alternate reading frame protein (Homo sapiens (Human)).